The primary structure comprises 51 residues: Large ribosomal subunit protein eL39 (51 aa).

This sequence belongs to the eukaryotic ribosomal protein eL39 family. In terms of assembly, component of the large ribosomal subunit. Interacts with IMPACT.

It is found in the cytoplasm. RNA-binding component of the large ribosomal subunit. The ribosome is a large ribonucleoprotein complex responsible for the synthesis of proteins in the cell. The chain is Large ribosomal subunit protein eL39 (Rpl39) from Mus musculus (Mouse).